A 397-amino-acid chain; its full sequence is MSESVHTNTSLWSKGMKAVIVAQFLSAFGDNALLFATLALLNAQFYPEWSQPILQMVFVGAYILFAPFVGQVADSFAKGRVMMFANGLKLLGAASICFGINPFLGYTLVGVGAAAYSPAKYGILGELTTGSKLVKANGLMEASTIAAILLGSVAGGVLADWHVLVALAACALAYGGAVVANIYIPKLAAARPGQSWNLINMTRSFLNACTSLWRNGETRFSLVGTSLFWGAGVTLRFLLVLWVPVALGITDNATPTYLNAMVAIGIVVGAGAAAKLVTLETVSRCMPAGILIGVVVLIFSLQHELLPAYALLMLIGVMGGFFVVPLNALLQERGKKSVGAGNAIAVQNLGENSAMLLMLGIYSLAVMIGIPVVPIGIGFGALFALAITALWIWQRRH.

The Periplasmic segment spans residues 1-17 (MSESVHTNTSLWSKGMK). Residues 18 to 38 (AVIVAQFLSAFGDNALLFATL) form a helical membrane-spanning segment. Residues 39–52 (ALLNAQFYPEWSQP) are Cytoplasmic-facing. A helical membrane pass occupies residues 53 to 73 (ILQMVFVGAYILFAPFVGQVA). Residues 74 to 90 (DSFAKGRVMMFANGLKL) are Periplasmic-facing. Residues 91–111 (LGAASICFGINPFLGYTLVGV) form a helical membrane-spanning segment. Over 112 to 144 (GAAAYSPAKYGILGELTTGSKLVKANGLMEAST) the chain is Cytoplasmic. Residues 145–165 (IAAILLGSVAGGVLADWHVLV) form a helical membrane-spanning segment. Residue Ala166 is a topological domain, periplasmic. The chain crosses the membrane as a helical span at residues 167–187 (LAACALAYGGAVVANIYIPKL). The Cytoplasmic segment spans residues 188 to 226 (AAARPGQSWNLINMTRSFLNACTSLWRNGETRFSLVGTS). A helical transmembrane segment spans residues 227-247 (LFWGAGVTLRFLLVLWVPVAL). Residues 248–256 (GITDNATPT) are Periplasmic-facing. A helical membrane pass occupies residues 257–277 (YLNAMVAIGIVVGAGAAAKLV). Residues 278 to 280 (TLE) are Cytoplasmic-facing. A helical membrane pass occupies residues 281–301 (TVSRCMPAGILIGVVVLIFSL). The Periplasmic portion of the chain corresponds to 302-304 (QHE). The helical transmembrane segment at 305–325 (LLPAYALLMLIGVMGGFFVVP) threads the bilayer. At 326–343 (LNALLQERGKKSVGAGNA) the chain is on the cytoplasmic side. A helical transmembrane segment spans residues 344 to 364 (IAVQNLGENSAMLLMLGIYSL). Topologically, residues 365-366 (AV) are periplasmic. Residues 367–387 (MIGIPVVPIGIGFGALFALAI) form a helical membrane-spanning segment. Over 388 to 397 (TALWIWQRRH) the chain is Cytoplasmic.

This sequence belongs to the major facilitator superfamily. LplT (TC 2.A.1.42) family.

It localises to the cell inner membrane. Its function is as follows. Catalyzes the facilitated diffusion of 2-acyl-glycero-3-phosphoethanolamine (2-acyl-GPE) into the cell. This is Lysophospholipid transporter LplT from Escherichia coli (strain SE11).